The following is a 189-amino-acid chain: MDQLKQSLLDAPIIEKDGYHYFVHPISDGVPMLRPELLREIVIKIIRKAELEDVDKIVTPAAMGIHISTAVSLMTDIPLVVVRKRQYGLDGEVSLSQVTGYSENEMYVNDVYEGDRVLVLDDVLSTGGTLAALTGALEDIGADICDIVCVIKKEGGENKLADDGYHAKTLINVDVVDGEVVVVDDYGDD.

Belongs to the purine/pyrimidine phosphoribosyltransferase family. Archaeal HPRT subfamily.

In terms of biological role, may catalyze a purine salvage reaction, the substrate is unknown. The polypeptide is HGPRTase-like protein (Halomicrobium mukohataei (strain ATCC 700874 / DSM 12286 / JCM 9738 / NCIMB 13541) (Haloarcula mukohataei)).